The chain runs to 245 residues: MTLTASSSSRAVTNSPVVVALDYHNRDAAMAFVDKIDPRDCRLKVGKEMFTLFGPQFVSELQQRGFDIFLDLKFHDIPNTAAHAVAAAADLGVWMVNVHASGGARMMAAAREALVPFGKDAPLLIAVTVLTSMEASDLADLGVTLSPADYAERLAALTQKCGLDGVVCSAQEAVRFKQVFGQEFKLVTPGIRPQGSDAGDQRRIMTPEQALSAGVDYMVIGRPVTQSVDPAQTLKAINASLQRSA.

Substrate is bound by residues Asp-22, Lys-44, 71–80 (DLKFHDIPNT), Thr-131, Arg-192, Gln-201, Gly-221, and Arg-222. Lys-73 functions as the Proton donor in the catalytic mechanism.

Belongs to the OMP decarboxylase family. Type 1 subfamily. As to quaternary structure, homodimer.

The enzyme catalyses orotidine 5'-phosphate + H(+) = UMP + CO2. The protein operates within pyrimidine metabolism; UMP biosynthesis via de novo pathway; UMP from orotate: step 2/2. Its function is as follows. Catalyzes the decarboxylation of orotidine 5'-monophosphate (OMP) to uridine 5'-monophosphate (UMP). The protein is Orotidine 5'-phosphate decarboxylase of Escherichia coli O81 (strain ED1a).